The sequence spans 296 residues: MSASGYKAGYISIVGRPNVGKSTLLNHLIKQKISITSRKAQTTRHRIHGILTDVQSQFIFVDTPGFQMRHRSQLNQVMNRVVLQSMQDVDVILFVLEAGRFGREDEQVLEQLPRNLPVILVINKIDLLPDKLQLLPFMQKMADLFDFADIVPVSALQNRQLSDLTEVIRHYLPENPPVFTEDEITDRSERFLAAELLREKVFRQIGEEVPYSVSVIIEQFAVEGNLRRIHACILVERENQKAIIIGKQGKKLKDMATQARKDMEVLFDGKVYLEIWVKVKSGWADDAIALKSMGYE.

The Era-type G domain occupies 7–174; it reads KAGYISIVGR…TEVIRHYLPE (168 aa). Residues 15–22 form a G1 region; sequence GRPNVGKS. 15-22 lines the GTP pocket; that stretch reads GRPNVGKS. A G2 region spans residues 41 to 45; sequence QTTRH. Positions 62–65 are G3; that stretch reads DTPG. GTP is bound by residues 62 to 66 and 123 to 126; these read DTPGF and NKID. A G4 region spans residues 123–126; that stretch reads NKID. The tract at residues 153–155 is G5; it reads VSA. One can recognise a KH type-2 domain in the interval 205 to 281; it reads IGEEVPYSVS…YLEIWVKVKS (77 aa).

It belongs to the TRAFAC class TrmE-Era-EngA-EngB-Septin-like GTPase superfamily. Era GTPase family. In terms of assembly, monomer.

It is found in the cytoplasm. It localises to the cell inner membrane. Functionally, an essential GTPase that binds both GDP and GTP, with rapid nucleotide exchange. Plays a role in 16S rRNA processing and 30S ribosomal subunit biogenesis and possibly also in cell cycle regulation and energy metabolism. This is GTPase Era from Nitrosomonas eutropha (strain DSM 101675 / C91 / Nm57).